A 467-amino-acid chain; its full sequence is Inactive pancreatic lipase-related protein 1 (467 aa).

The first 17 residues, 1–17 (MLIFWTITLFLLGAAKG), serve as a signal peptide directing secretion. 2 cysteine pairs are disulfide-bonded: C21-C27 and C109-C120. The active-site Nucleophile is S171. D194 acts as the Charge relay system in catalysis. Residues E205, R208, D210, and D213 each coordinate Ca(2+). C255 and C279 are joined by a disulfide. Catalysis depends on H281, which acts as the Charge relay system. Intrachain disulfides connect C303–C314, C317–C322, and C451–C467. The 112-residue stretch at 356 to 467 (WRYGVSITLS…EDTLLTLTPC (112 aa)) folds into the PLAT domain.

This sequence belongs to the AB hydrolase superfamily. Lipase family. Pancreas.

The protein resides in the secreted. May function as inhibitor of dietary triglyceride digestion. Lacks detectable lipase activity towards triglycerides, diglycerides, phosphatidylcholine, galactolipids or cholesterol esters (in vitro). This chain is Inactive pancreatic lipase-related protein 1 (PNLIPRP1), found in Homo sapiens (Human).